The following is a 262-amino-acid chain: Shikimate dehydrogenase (NADP(+)) (262 aa).

Shikimate contacts are provided by residues 15–17 (SRS) and Thr-62. Catalysis depends on Lys-66, which acts as the Proton acceptor. Position 78 (Glu-78) interacts with NADP(+). The shikimate site is built by Asn-87 and Asp-102. Residues 126 to 130 (GAGGA), 150 to 155 (NRTLAR), and Met-214 each bind NADP(+). Position 216 (Tyr-216) interacts with shikimate. Gly-236 contacts NADP(+).

Belongs to the shikimate dehydrogenase family. As to quaternary structure, homodimer.

It carries out the reaction shikimate + NADP(+) = 3-dehydroshikimate + NADPH + H(+). The protein operates within metabolic intermediate biosynthesis; chorismate biosynthesis; chorismate from D-erythrose 4-phosphate and phosphoenolpyruvate: step 4/7. In terms of biological role, involved in the biosynthesis of the chorismate, which leads to the biosynthesis of aromatic amino acids. Catalyzes the reversible NADPH linked reduction of 3-dehydroshikimate (DHSA) to yield shikimate (SA). The chain is Shikimate dehydrogenase (NADP(+)) from Acinetobacter baumannii (strain SDF).